The primary structure comprises 421 residues: ATP-dependent RNA helicase RhlB (421 aa).

Residues glutamine 9–alanine 37 carry the Q motif motif. Residues leucine 40–isoleucine 219 enclose the Helicase ATP-binding domain. Alanine 53–threonine 60 is a binding site for ATP. Residues aspartate 165–aspartate 168 carry the DEAD box motif. Positions arginine 245 to methionine 390 constitute a Helicase C-terminal domain. A disordered region spans residues aspartate 392 to glycine 421. Positions proline 402–proline 414 are enriched in low complexity.

This sequence belongs to the DEAD box helicase family. RhlB subfamily. Component of the RNA degradosome, which is a multiprotein complex involved in RNA processing and mRNA degradation.

The protein localises to the cytoplasm. It carries out the reaction ATP + H2O = ADP + phosphate + H(+). Functionally, DEAD-box RNA helicase involved in RNA degradation. Has RNA-dependent ATPase activity and unwinds double-stranded RNA. The protein is ATP-dependent RNA helicase RhlB of Escherichia coli O17:K52:H18 (strain UMN026 / ExPEC).